Consider the following 373-residue polypeptide: MPDLKRAIGLMSGTSMDGIDIALLATDGENWIERRASASMDYSDGFRARLKAGLVDARAIKDRAERPGLLRQLEHDLTLLHAVAVHDFLHEQGLQPHQIDVIGFHGQTVLHRPNESLTVQIGDGALLARETGIPVVYDMRAEDMRHGGQGAPLIPAYHAALAANLPLGLKGPVVFVNIGGISNLTYVGEDGALIAYDSGPGNMLIDQWMELHGHGRFDPGGATAMSGSVDRNTAHRYLEHEFFKGNHRRSLDRGDFAIPAKGELNLADGARTLAFVSAAAILKSASHLPARPRTYVVSGGGRKNGALMDELTALAEREGAHVIDADNAGFDGDAMEAEAWAYLAVRSLCGLPLTYPSTTGCDKPVSGGVPVRP.

13 to 20 (GTSMDGID) serves as a coordination point for ATP.

It belongs to the anhydro-N-acetylmuramic acid kinase family.

The catalysed reaction is 1,6-anhydro-N-acetyl-beta-muramate + ATP + H2O = N-acetyl-D-muramate 6-phosphate + ADP + H(+). It functions in the pathway amino-sugar metabolism; 1,6-anhydro-N-acetylmuramate degradation. The protein operates within cell wall biogenesis; peptidoglycan recycling. Its function is as follows. Catalyzes the specific phosphorylation of 1,6-anhydro-N-acetylmuramic acid (anhMurNAc) with the simultaneous cleavage of the 1,6-anhydro ring, generating MurNAc-6-P. Is required for the utilization of anhMurNAc either imported from the medium or derived from its own cell wall murein, and thus plays a role in cell wall recycling. The protein is Anhydro-N-acetylmuramic acid kinase of Brucella suis (strain ATCC 23445 / NCTC 10510).